Here is a 297-residue protein sequence, read N- to C-terminus: HTH-type transcriptional regulator ArgP (297 aa).

The region spanning Pro-4 to Thr-60 is the HTH lysR-type domain. The H-T-H motif DNA-binding region spans Phe-21–Lys-40.

It belongs to the LysR transcriptional regulatory family. In terms of assembly, homodimer.

In terms of biological role, controls the transcription of genes involved in arginine and lysine metabolism. The chain is HTH-type transcriptional regulator ArgP from Pectobacterium atrosepticum (strain SCRI 1043 / ATCC BAA-672) (Erwinia carotovora subsp. atroseptica).